A 135-amino-acid chain; its full sequence is Small ribosomal subunit protein bS16m (135 aa).

Residues methionine 1–isoleucine 34 constitute a mitochondrion transit peptide. Position 130 is a phosphothreonine (threonine 130).

It belongs to the bacterial ribosomal protein bS16 family. Component of the mitochondrial ribosome small subunit (28S) which comprises a 12S rRNA and about 30 distinct proteins.

It localises to the mitochondrion. The polypeptide is Small ribosomal subunit protein bS16m (MRPS16) (Bos taurus (Bovine)).